We begin with the raw amino-acid sequence, 154 residues long: SsrA-binding protein (154 aa).

A disordered region spans residues 135 to 154 (KREDLKRRQDQRDMARAMKR).

It belongs to the SmpB family.

The protein localises to the cytoplasm. Its function is as follows. Required for rescue of stalled ribosomes mediated by trans-translation. Binds to transfer-messenger RNA (tmRNA), required for stable association of tmRNA with ribosomes. tmRNA and SmpB together mimic tRNA shape, replacing the anticodon stem-loop with SmpB. tmRNA is encoded by the ssrA gene; the 2 termini fold to resemble tRNA(Ala) and it encodes a 'tag peptide', a short internal open reading frame. During trans-translation Ala-aminoacylated tmRNA acts like a tRNA, entering the A-site of stalled ribosomes, displacing the stalled mRNA. The ribosome then switches to translate the ORF on the tmRNA; the nascent peptide is terminated with the 'tag peptide' encoded by the tmRNA and targeted for degradation. The ribosome is freed to recommence translation, which seems to be the essential function of trans-translation. The chain is SsrA-binding protein from Microcystis aeruginosa (strain NIES-843 / IAM M-2473).